Reading from the N-terminus, the 127-residue chain is uncharacterized protein (127 aa).

At Thr30 the chain carries Phosphothreonine. A disordered region spans residues 51 to 75; that stretch reads APTYEQVLYPPASQKKTSNSTSEES. Ser63 carries the post-translational modification Phosphoserine.

This is an uncharacterized protein from Mus musculus (Mouse).